A 665-amino-acid polypeptide reads, in one-letter code: Phenol hydroxylase (665 aa).

FAD contacts are provided by residues 18–19 (PA), 43–45 (DKR), 51–56 (NGQADG), glutamine 118, tyrosine 290, aspartate 358, and 368–372 (GQGMN). Aspartate 55 contacts substrate. Substrate is bound at residue tyrosine 290.

It belongs to the PheA/TfdB FAD monooxygenase family. As to quaternary structure, homodimer. FAD is required as a cofactor.

The catalysed reaction is phenol + NADPH + O2 + H(+) = catechol + NADP(+) + H2O. Its pathway is aromatic compound metabolism; phenol degradation. Its activity is regulated as follows. Inhibited by excess phenol. Heavy metals such AsCuSO(4), AgNO(3), or HgCl(2) severely inhibit activity. Functionally, hydroxylates phenol to catechol. Phenol is the best substrate, but the enzyme also accepts isomeric diphenols, hydroxyl-, amino-, halogen- or methyl-substituted phenols and, to a lesser degree, cresols. The sequence is that of Phenol hydroxylase from Cutaneotrichosporon cutaneum (Yeast).